A 145-amino-acid chain; its full sequence is Ponticulin-like protein B (145 aa).

A signal peptide spans 1-22; it reads MLFIKSLLLLLSLIFAVSNATG. N-linked (GlcNAc...) asparagine glycosylation is present at Asn-34. Residues 107–126 form a disordered region; the sequence is DTTSSSTSPSSTSPSSTSPA. The span at 108–126 shows a compositional bias: low complexity; it reads TTSSSTSPSSTSPSSTSPA. A lipid anchor (GPI-like-anchor amidated serine) is attached at Ser-117. The propeptide at 118-145 is removed in mature form; sequence TSPSSTSPASTLIGSIAFVTLAALFALI.

Belongs to the ponticulin family. The GPI-like-anchor contains a phosphoceramide group, rather than a phosphatidyl group.

The protein localises to the cell membrane. Binds F-actin and nucleates actin assembly. The protein is Ponticulin-like protein B (ponB) of Dictyostelium discoideum (Social amoeba).